The chain runs to 591 residues: Homeobox domain-containing transcription factor HOB1 (591 aa).

A compositionally biased stretch (basic and acidic residues) spans methionine 1 to glutamate 15. Disordered stretches follow at residues methionine 1 to glycine 37 and isoleucine 148 to alanine 168. The segment at residues isoleucine 176–glutamate 223 is a DNA-binding region (homeobox). Disordered regions lie at residues aspartate 420–serine 463 and aspartate 543–glutamate 563. The segment covering glutamine 427–glutamine 441 has biased composition (acidic residues). A compositionally biased stretch (basic and acidic residues) spans aspartate 543 to alanine 560.

The protein localises to the nucleus. Its function is as follows. General stress-responsive transcription factor that governs multiple stress responses and adaptations. Plays a key role in virulence. Mediates the expression of LAC1, which is the major laccase involved in melanin synthesis. Positively regulates BZP4 induction under conditions of nutrient starvation and basal expression levels of MBS1 and USV101, 3 major transcription factors that independently contribute to melanin production. Also acts as a key regulator of ergosterol gene expression. In Cryptococcus neoformans var. grubii serotype A (strain H99 / ATCC 208821 / CBS 10515 / FGSC 9487) (Filobasidiella neoformans var. grubii), this protein is Homeobox domain-containing transcription factor HOB1.